Consider the following 152-residue polypeptide: MSSDWDTNTVIGQRVRTGGSGPRQQVARTQGQINAARRAGLVLSVDKKYASSNTKANNEGQRLTMVDRETDIVKPKKLDPSVGRAIAKGRGDKGMTQKDLATRINEKPTVINDYEAGRAIPNQQILAKMERALGVKLRGKGIGEPLGGPKKK.

Composition is skewed to polar residues over residues 1–11 (MSSDWDTNTVI) and 22–32 (PRQQVARTQGQ). Positions 1–32 (MSSDWDTNTVIGQRVRTGGSGPRQQVARTQGQ) are disordered. Positions 86–140 (IAKGRGDKGMTQKDLATRINEKPTVINDYEAGRAIPNQQILAKMERALGVKLRGK) constitute an HTH cro/C1-type domain. The segment at residues 97-116 (QKDLATRINEKPTVINDYEA) is a DNA-binding region (H-T-H motif).

It belongs to the MBF1 family.

Transcriptional coactivator that stimulates GCN4-dependent transcriptional activity by bridging the DNA-binding region of GCN4 and TBP (SPT15), thereby recruiting TBP to GCN4-bound promoters. Involved in induction of the ribosome quality control (RQC) pathway; a pathway that degrades nascent peptide chains during problematic translation. Required to prevent stalled ribosomes from frameshifting. This Eremothecium gossypii (strain ATCC 10895 / CBS 109.51 / FGSC 9923 / NRRL Y-1056) (Yeast) protein is Multiprotein-bridging factor 1 (MBF1).